A 297-amino-acid polypeptide reads, in one-letter code: Putative movement protein (297 aa).

Residues 249–297 form a disordered region; sequence STGLKIRDKSEDDNQRKHPVPLTSSNNKLKTLRVSTTPIVNGRSTSTSE. Over residues 253–264 the composition is skewed to basic and acidic residues; that stretch reads KIRDKSEDDNQR. Over residues 270–297 the composition is skewed to polar residues; that stretch reads LTSSNNKLKTLRVSTTPIVNGRSTSTSE.

The protein resides in the host cell junction. Its subcellular location is the host plasmodesma. Its function is as follows. Transports viral genome to neighboring plant cells directly through plasmosdesmata, without any budding. The movement protein allows efficient cell to cell propagation, by bypassing the host cell wall barrier. This Citrus sinensis (Sweet orange) protein is Putative movement protein (MP).